Consider the following 735-residue polypeptide: Coiled-coil quantitatively-enriched protein 1 (735 aa).

Residues 514-719 (AAVQYLQRRL…TLKILEQKSL (206 aa)) are a coiled coil.

Interacts (during meiosis) with pcp1. Interacts with clr3, pot1, taz1 and tpz1.

The protein resides in the nucleus. The protein localises to the nucleoplasm. It localises to the chromosome. It is found in the telomere. Functionally, component of the meiotic bouquet that facilitates meiotic nuclear reorganization of the telomeres to the centrosome. Links telomeres to the meiotic centrosome component pcp1. Essential for the formation of normal telomere clusters during meiotic prophase. Required for telomere length regulation and chromosome segregation. Required for proper positioning of nucleosomes at heterochromatic loci and for transcriptional gene silencing (TGS) function of the Snf2/Hdac-containing repressor complex (SHREC). The protein is Coiled-coil quantitatively-enriched protein 1 (ccq1) of Schizosaccharomyces pombe (strain 972 / ATCC 24843) (Fission yeast).